The following is a 568-amino-acid chain: Proline--tRNA ligase (568 aa).

This sequence belongs to the class-II aminoacyl-tRNA synthetase family. ProS type 1 subfamily. Homodimer.

It localises to the cytoplasm. The enzyme catalyses tRNA(Pro) + L-proline + ATP = L-prolyl-tRNA(Pro) + AMP + diphosphate. Functionally, catalyzes the attachment of proline to tRNA(Pro) in a two-step reaction: proline is first activated by ATP to form Pro-AMP and then transferred to the acceptor end of tRNA(Pro). As ProRS can inadvertently accommodate and process non-cognate amino acids such as alanine and cysteine, to avoid such errors it has two additional distinct editing activities against alanine. One activity is designated as 'pretransfer' editing and involves the tRNA(Pro)-independent hydrolysis of activated Ala-AMP. The other activity is designated 'posttransfer' editing and involves deacylation of mischarged Ala-tRNA(Pro). The misacylated Cys-tRNA(Pro) is not edited by ProRS. This is Proline--tRNA ligase from Listeria monocytogenes serovar 1/2a (strain ATCC BAA-679 / EGD-e).